Here is a 95-residue protein sequence, read N- to C-terminus: Defensin-like protein 232 (95 aa).

Residues Met1 to Ala26 form the signal peptide. 4 cysteine pairs are disulfide-bonded: Cys33-Cys94, Cys43-Cys68, Cys51-Cys84, and Cys66-Cys86.

Belongs to the DEFL family. Flower buds.

It is found in the secreted. This is Defensin-like protein 232 (SCRL23) from Arabidopsis thaliana (Mouse-ear cress).